A 55-amino-acid polypeptide reads, in one-letter code: Large ribosomal subunit protein bL33 (55 aa).

The protein belongs to the bacterial ribosomal protein bL33 family.

The polypeptide is Large ribosomal subunit protein bL33 (Bordetella avium (strain 197N)).